The following is a 264-amino-acid chain: Exosome complex component Rrp4 (264 aa).

Residues 65-137 (GDNVLGKIVD…EVNNIELTTK (73 aa)) enclose the S1 motif domain. The KH domain maps to 147–206 (RGGQIIKITSSKVPRVIGKGGSMINMIKKLTQSRIIVGQNGWIWISSKNPELEKLAIEAI). Over residues 244–258 (SLEEETQEETVMEND) the composition is skewed to acidic residues. The interval 244–264 (SLEEETQEETVMENDVEARGP) is disordered.

The protein belongs to the RRP4 family. In terms of assembly, component of the archaeal exosome complex. Forms a trimer of Rrp4 and/or Csl4 subunits. The trimer associates with a hexameric ring-like arrangement composed of 3 Rrp41-Rrp42 heterodimers.

It is found in the cytoplasm. Non-catalytic component of the exosome, which is a complex involved in RNA degradation. Increases the RNA binding and the efficiency of RNA degradation. Confers strong poly(A) specificity to the exosome. This Pyrococcus furiosus (strain ATCC 43587 / DSM 3638 / JCM 8422 / Vc1) protein is Exosome complex component Rrp4.